Reading from the N-terminus, the 284-residue chain is 4-diphosphocytidyl-2-C-methyl-D-erythritol kinase (284 aa).

The active site involves lysine 9. 92 to 102 (PMGGGIGGGSS) serves as a coordination point for ATP. Aspartate 134 is a catalytic residue.

This sequence belongs to the GHMP kinase family. IspE subfamily.

The catalysed reaction is 4-CDP-2-C-methyl-D-erythritol + ATP = 4-CDP-2-C-methyl-D-erythritol 2-phosphate + ADP + H(+). It functions in the pathway isoprenoid biosynthesis; isopentenyl diphosphate biosynthesis via DXP pathway; isopentenyl diphosphate from 1-deoxy-D-xylulose 5-phosphate: step 3/6. Its function is as follows. Catalyzes the phosphorylation of the position 2 hydroxy group of 4-diphosphocytidyl-2C-methyl-D-erythritol. The protein is 4-diphosphocytidyl-2-C-methyl-D-erythritol kinase of Stutzerimonas stutzeri (strain A1501) (Pseudomonas stutzeri).